A 606-amino-acid polypeptide reads, in one-letter code: Zinc finger protein 214 (606 aa).

A KRAB domain is found at Val3 to Tyr83. The C2H2-type 1; degenerate zinc-finger motif lies at Tyr275 to His297. The segment at Tyr303 to His325 adopts a C2H2-type 2 zinc-finger fold. The C2H2-type 3; degenerate zinc-finger motif lies at Phe330 to His352. 8 C2H2-type zinc fingers span residues Phe358–His380, Tyr386–His408, Tyr414–His436, Tyr442–His464, Tyr470–His492, Tyr498–His520, Tyr526–His548, and Tyr554–His576.

This sequence belongs to the krueppel C2H2-type zinc-finger protein family.

Its subcellular location is the nucleus. Functionally, may be involved in transcriptional regulation. The chain is Zinc finger protein 214 (ZNF214) from Homo sapiens (Human).